The chain runs to 1032 residues: MAEARRFSPVHELDVGQILSEARHRWLRPPEICEILQNYQRFQISTEPPTTPSSGSVFMFDRKVLRYFRKDGHNWRKKKDGKTVKEAHERLKAGSVDVLHCYYAHGQDNENFQRRSYWLLQEELSHIVFVHYLEVKGSRVSTSFNRMQRTEDAARSPQETGDALTSEHDGYASCSFNQNDHSNHSQTTDSASVNGFHSPELEDAESAYNQHGSSTAYSHQELQQPATGGNLTGFDPYYQISLTPRDSYQKELRTIPVTDSSIMVDKSKTINSPGVTNGLKNRKSIDSQTWEEILGNCGSGVEALPLQPNSEHEVLDQILESSFTMQDFASLQESMVKSQNQELNSGLTSDRTVWFQGQDMELNAISNLASNEKAPYLSTMKQHLLHGALGEEGLKKMDSFNRWMSKELGDVGVIADANESFTQSSSRTYWEEVESEDGSNGHNSRRDMDGYVMSPSLSKEQLFSINDFSPSWAYVGCEVVVFVTGKFLKTREETEIGEWSCMFGQTEVPADVISNGILQCVAPMHEAGRVPFYVTCSNRLACSEVREFEYKVAESQVFDREADDESTIDILEARFVKLLCSKSENTSPVSGNDSDLSQLSEKISLLLFENDDQLDQMLMNEISQENMKNNLLQEFLKESLHSWLLQKIAEGGKGPSVLDEGGQGVLHFAASLGYNWALEPTIIAGVSVDFRDVNGWTALHWAAFFGRERIIGSLIALGAAPGTLTDPNPDFPSGSTPSDLAYANGHKGIAGYLSEYALRAHVSLLSLNDKNAETVEMAPSPSSSSLTDSLTAVRNATQAAARIHQVFRAQSFQKKQLKEFGDKKLGMSEERALSMLAPKTHKSGRAHSDDSVQAAAIRIQNKFRGYKGRKDYLITRQRIIKIQAHVRGYQFRKNYRKIIWSVGVLEKVILRWRRKGAGLRGFKSEALVEKMQDGTEKEEDDDFFKQGRKQTEDRLQKALARVKSMVQYPEARDQYRRLLNVVNDIQESKVEKALENSEATCFDDDDDLIDIEALLEDDDTLMLPMSSSLWTS.

Residues 15-141 (VGQILSEARH…YLEVKGSRVS (127 aa)) constitute a DNA-binding region (CG-1). The disordered stretch occupies residues 146 to 197 (RMQRTEDAARSPQETGDALTSEHDGYASCSFNQNDHSNHSQTTDSASVNGFH). Over residues 174–195 (CSFNQNDHSNHSQTTDSASVNG) the composition is skewed to polar residues. The residue at position 272 (Ser-272) is a Phosphoserine. ANK repeat units lie at residues 661–690 (GGQG…SVDF), 694–723 (NGWT…APGT), and 733–762 (SGST…RAHV). 2 consecutive IQ domains span residues 852 to 881 (VQAA…RIIK) and 875 to 904 (TRQR…SVGV). The interval 900–922 (WSVGVLEKVILRWRRKGAGLRGF) is calmodulin-binding. Positions 945-987 (KQGRKQTEDRLQKALARVKSMVQYPEARDQYRRLLNVVNDIQE) form a coiled coil. At Ser-964 the chain carries Phosphoserine.

The protein belongs to the CAMTA family. Interacts with SR1IP1. Interacts with DSC1. Ubiquinated during pathogen infection. Ubiquitination leads to its subsequent proteasome-dependent degradation, thus allowing the establishment of plant defense response. As to expression, expressed in roots, stems, leaves, carpels, and siliques, but not in stigmas or other parts of the flower.

The protein resides in the nucleus. Functionally, transcription activator that binds to the DNA consensus sequence 5'-[ACG]CGCG[GTC]-3'. Binds calmodulin in a calcium-dependent manner in vitro. Regulates transcriptional activity in response to calcium signals. Involved in freezing tolerance in association with CAMTA1 and CAMTA2. Required for the cold-induced expression of DREB1B/CBF1, DREB1C/CBF2, ZAT12 and GOLS3. Involved in response to cold. Contributes together with CAMTA5 to the positive regulation of the cold-induced expression of DREB1A/CBF3, DREB1B/CBF1 and DREB1C/CBF2. Involved together with CAMTA2 and CAMTA4 in the positive regulation of a general stress response (GSR). Involved in the regulation of GSR amplitude downstream of MEKK1. Involved in the regulation of a set of genes involved in defense responses against pathogens. Involved in the regulation of both basal resistance and systemic acquired resistance (SAR). Acts as negative regulator of plant immunity. Binds to the promoter of the defense-related gene EDS1 and represses its expression. Binds to the promoter of the defense-related gene NDR1 and represses its expression. Involved in defense against insects. Required for tolerance to the generalist herbivore Trichoplusia ni, and contributes to the positive regulation of genes associated with glucosinolate metabolism. Required for tolerance to Bradysia impatiens larvae. Mediates herbivore-induced wound response. Required for wound-induced jasmonate accumulation. Involved in the regulation of ethylene-induced senescence by binding to the promoter of the senescence-inducer gene EIN3 and repressing its expression. The sequence is that of Calmodulin-binding transcription activator 3 from Arabidopsis thaliana (Mouse-ear cress).